The sequence spans 811 residues: Protein VAC14 homolog (811 aa).

HEAT repeat units lie at residues 81-119, 122-160, 240-278, 334-372, 375-412, 431-469, and 472-510; these read DSYMESILLPVLYCFNDSDSKIRYYACESMYNIGKVAKG, FRYFNLIFDVLCKLFADTEITVKNGAELLDRLIKDIVMQ, ISYLPFLLDGLMNYLSDPNESIRIVTSNCLYDFLREIQK, QIDYKRILEIIIDHLGSSVPLIQEKALKWLFEFIYIAPK, LLQIPKVLENLLPLMSNDENMRQSAKDLSQNLVILVSK, SVDFRSLIEVLQKLLSNDNEETRLCALEWVLLLQRRTGG, and INMHDPIFQTLLLQLSDPSDLVVSRTLELLAHIAISHKS. Over residues 775 to 785 the composition is skewed to low complexity; that stretch reads TSASGITTTAS. Residues 775 to 811 are disordered; sequence TSASGITTTASNSRDSFITRLPPTAALSTGARKKPKQ.

This sequence belongs to the VAC14 family. Component of the PI(3,5)P2 regulatory complex, composed of ATG18, FIG4, FAB1, VAC14 and VAC7. VAC14 nucleates the assembly of the complex and serves as a scaffold.

It is found in the cytoplasm. The protein localises to the vacuole membrane. In terms of biological role, the PI(3,5)P2 regulatory complex regulates both the synthesis and turnover of phosphatidylinositol 3,5-bisphosphate (PtdIns(3,5)P2). Regulates the synthesis of PtdIns(3,5)P2 by positive activation of FAB1 and by controlling FIG4 localization. This chain is Protein VAC14 homolog, found in Schizosaccharomyces pombe (strain 972 / ATCC 24843) (Fission yeast).